We begin with the raw amino-acid sequence, 618 residues long: Dihydroxy-acid dehydratase (618 aa).

Position 81 (D81) interacts with Mg(2+). C122 is a [2Fe-2S] cluster binding site. Mg(2+)-binding residues include D123 and K124. At K124 the chain carries N6-carboxylysine. C195 is a binding site for [2Fe-2S] cluster. E491 serves as a coordination point for Mg(2+). S517 functions as the Proton acceptor in the catalytic mechanism.

Belongs to the IlvD/Edd family. In terms of assembly, homodimer. [2Fe-2S] cluster is required as a cofactor. The cofactor is Mg(2+).

The enzyme catalyses (2R)-2,3-dihydroxy-3-methylbutanoate = 3-methyl-2-oxobutanoate + H2O. The catalysed reaction is (2R,3R)-2,3-dihydroxy-3-methylpentanoate = (S)-3-methyl-2-oxopentanoate + H2O. It functions in the pathway amino-acid biosynthesis; L-isoleucine biosynthesis; L-isoleucine from 2-oxobutanoate: step 3/4. The protein operates within amino-acid biosynthesis; L-valine biosynthesis; L-valine from pyruvate: step 3/4. Functions in the biosynthesis of branched-chain amino acids. Catalyzes the dehydration of (2R,3R)-2,3-dihydroxy-3-methylpentanoate (2,3-dihydroxy-3-methylvalerate) into 2-oxo-3-methylpentanoate (2-oxo-3-methylvalerate) and of (2R)-2,3-dihydroxy-3-methylbutanoate (2,3-dihydroxyisovalerate) into 2-oxo-3-methylbutanoate (2-oxoisovalerate), the penultimate precursor to L-isoleucine and L-valine, respectively. The polypeptide is Dihydroxy-acid dehydratase (Rhodopseudomonas palustris (strain TIE-1)).